An 812-amino-acid polypeptide reads, in one-letter code: cAMP-regulated phosphoprotein 21 (812 aa).

A disordered region spans residues 1–130 (MSEQGDLNQA…KDKTSEKPKI (130 aa)). Serine 2 bears the N-acetylserine mark. Positions 9 to 25 (QAIAEEGGTEQETATPE) are enriched in low complexity. Positions 32 to 58 (ESLDEEEKLELQRRLEAQNQERRKSKS) form a coiled coil. Serine 33 is modified (phosphoserine). Positions 40–53 (LELQRRLEAQNQER) are enriched in basic and acidic residues. Serine 56 carries the phosphoserine modification. Over residues 90-100 (IHLQLSSFSSL) the composition is skewed to low complexity. A compositionally biased stretch (basic and acidic residues) spans 102-130 (EEDKSRKDDSEREKEKDKNKDKTSEKPKI). Phosphoserine is present on serine 134. The region spanning 164–227 (RMILLKMEQE…SVIINKTSST (64 aa)) is the R3H domain. An SUZ domain is found at 228–300 (RIPEQRFCEH…VRERIFAHDS (73 aa)). The interval 246–281 (SQKRFILKRDNSSIDKEDNQQNRMHPFRDDRRSKSI) is disordered. Serine 300 carries the post-translational modification Phosphoserine. Disordered regions lie at residues 332 to 436 (RGNR…PLVS), 485 to 544 (HTGQ…MAGP), and 561 to 632 (LSRQ…QQPP). Residues 339-349 (GRTSGSRQSSS) show a composition bias toward low complexity. Basic and acidic residues predominate over residues 351–360 (NELKWSDHQR). The span at 361 to 373 (AWSSTDSDSSNRN) shows a compositional bias: polar residues. Serine 363 and serine 383 each carry phosphoserine. The segment covering 391–423 (TRGDSTSSTRSTGKLSKAGSESSSSAGSSGSLS) has biased composition (low complexity). Serine 562 carries the post-translational modification Phosphoserine. Residues 582–602 (LMPQPAQQPSYVIASTGQQLP) show a composition bias toward polar residues. Residues 619–632 (QPPPSPQGFVQQPP) show a composition bias toward pro residues. Arginine 655 carries the asymmetric dimethylarginine modification.

Interacts with CALM1. Post-translationally, phosphorylation at Ser-56 favors interaction with CALM1. In terms of processing, isoform 1 is methylated by CARM1 at Arg-655 in immature thymocytes. As to expression, isoform 2 is expressed in brain. Isoform 1 is present in immature thymocytes (at protein level).

The protein localises to the cytoplasm. Isoform 2 may act as a competitive inhibitor of calmodulin-dependent enzymes such as calcineurin in neurons. This is cAMP-regulated phosphoprotein 21 (ARPP21) from Homo sapiens (Human).